The chain runs to 407 residues: FK506-binding protein 3 (407 aa).

Disordered regions lie at residues arginine 46–glycine 136, aspartate 191–valine 223, and glutamine 236–valine 297. 2 stretches are compositionally biased toward acidic residues: residues asparagine 65 to alanine 88 and aspartate 103 to glycine 136. Over residues glutamine 236 to valine 252 the composition is skewed to acidic residues. Residues valine 253–alanine 272 show a composition bias toward basic and acidic residues. Residues glycine 321 to lysine 407 enclose the PPIase FKBP-type domain.

The protein belongs to the FKBP-type PPIase family. FKBP3/4 subfamily.

It is found in the nucleus. It localises to the nucleolus. The enzyme catalyses [protein]-peptidylproline (omega=180) = [protein]-peptidylproline (omega=0). With respect to regulation, inhibited by both FK506 and rapamycin. Functionally, PPIases accelerate the folding of proteins. It catalyzes the cis-trans isomerization of proline imidic peptide bonds in oligopeptides. This is FK506-binding protein 3 (FPR3) from Yarrowia lipolytica (strain CLIB 122 / E 150) (Yeast).